The primary structure comprises 22 residues: QKCCSGGSCPLYFRDRLICPCC.

Gln1 is subject to Pyrrolidone carboxylic acid. Intrachain disulfides connect Cys3-Cys21, Cys4-Cys19, and Cys9-Cys22.

Belongs to the conotoxin M superfamily. In terms of tissue distribution, expressed by the venom duct.

The protein localises to the secreted. Its function is as follows. Probable competitive antagonist of fish muscle acetylcholine receptor. Inhibits postsynaptic nicotinic acetylcholine receptors (nAChRs) from fish (zebrafish and goldfish) and frogs (IC(50)=0.1 uM). Protects these receptors from block by alpha-bungarotoxin and alpha-conotoxin EI. Does not block nAChRs at the neuromuscular junction of Rana pipiens. Shows a weak inhibition on mammalian adult and fetal muscle nAChRs (alpha-1-beta-1-delta-epsilon/CHRNA1-CHRNB1-CHRND-CHRNE and alpha-1 beta-1 gamma delta/CHRNA1-CHRNB1-CHRNG-CHRND) (IC(50)=3-45 uM). In vivo, induces paralysis in goldfish (Carassius auratus) but not mice. In Conus magus (Magical cone), this protein is Conotoxin MIIIJ.